A 147-amino-acid polypeptide reads, in one-letter code: Ubiquitin-conjugating enzyme E2 D3 (147 aa).

A UBC core domain is found at 1 to 147 (MALKRINKEL…SREWTQKYAM (147 aa)). A disulfide bond links C21 and C107. C85 serves as the catalytic Glycyl thioester intermediate.

The protein belongs to the ubiquitin-conjugating enzyme family. Interacts with SCF (SKP1-CUL1-F-box protein) E3 ubiquitin ligase complex; when Cullin is neddylated, the interaction between the E2 and the SCF complex is strengthened. Interacts with DAPK3. Interacts with BRCA1; the DNA damage checkpoint promotes the association with BRCA1 after ionizing radiation. Interacts non-covalently with ubiquitin. Interacts with E3 ubiquitin-protein ligase CBLC. Interacts with UBTD1. Interacts with RIGI and RNF135; involved in RIGI ubiquitination and activation. Phosphorylated by AURKB.

The protein localises to the cell membrane. The protein resides in the endosome membrane. It catalyses the reaction S-ubiquitinyl-[E1 ubiquitin-activating enzyme]-L-cysteine + [E2 ubiquitin-conjugating enzyme]-L-cysteine = [E1 ubiquitin-activating enzyme]-L-cysteine + S-ubiquitinyl-[E2 ubiquitin-conjugating enzyme]-L-cysteine.. The catalysed reaction is S-ubiquitinyl-[E1 ubiquitin-activating enzyme]-L-cysteine + [acceptor protein]-L-lysine = [E1 ubiquitin-activating enzyme]-L-cysteine + N(6)-monoubiquitinyl-[acceptor protein]-L-lysine.. Its pathway is protein modification; protein ubiquitination. Accepts ubiquitin from the E1 complex and catalyzes its covalent attachment to other proteins. In vitro catalyzes 'Lys-11'-, as well as 'Lys-48'-linked polyubiquitination. Cooperates with the E2 CDC34 and the SCF(FBXW11) E3 ligase complex for the polyubiquitination of NFKBIA leading to its subsequent proteasomal degradation. Acts as an initiator E2, priming the phosphorylated NFKBIA target at positions 'Lys-21' and/or 'Lys-22' with a monoubiquitin. Ubiquitin chain elongation is then performed by CDC34, building ubiquitin chains from the UBE2D3-primed NFKBIA-linked ubiquitin. Also acts as an initiator E2, in conjunction with RNF8, for the priming of PCNA. Monoubiquitination of PCNA, and its subsequent polyubiquitination, are essential events in the operation of the DNA damage tolerance (DDT) pathway that is activated after DNA damage caused by UV or chemical agents during S-phase. Associates with the BRCA1/BARD1 E3 ligase complex to perform ubiquitination at DNA damage sites following ionizing radiation leading to DNA repair. Targets DAPK3 for ubiquitination which influences promyelocytic leukemia protein nuclear body (PML-NB) formation in the nucleus. In conjunction with the MDM2 and TOPORS E3 ligases, functions ubiquitination of p53/TP53. In conjunction with the CBL E3 ligase, targets EGFR for polyubiquitination at the plasma membrane as well as during its internalization and transport on endosomes. In conjunction with the STUB1 E3 quality control E3 ligase, ubiquitinates unfolded proteins to catalyze their immediate destruction. Together with RNF135, catalyzes the viral RNA-dependent 'Lys-63'-linked polyubiquitination of RIGI to activate the downstream signaling pathway that leads to interferon beta production. Together with ZNF598, catalyzes ubiquitination of 40S ribosomal proteins in response to ribosome collisions. In cooperation with the GATOR2 complex, catalyzes 'Lys-6'-linked ubiquitination of NPRL2. This Bos taurus (Bovine) protein is Ubiquitin-conjugating enzyme E2 D3 (UBE2D3).